Consider the following 695-residue polypeptide: Cysteine-rich receptor-like protein kinase 6 (695 aa).

Residues 1-31 (MRRHRPYLDGVAAAAATFLLAVLLHAPLAAG) form the signal peptide. At 32 to 294 (EDEPPPWVLC…ATSGEKTKNR (263 aa)) the chain is on the extracellular side. 2 consecutive Gnk2-homologous domains span residues 38–142 (WVLC…NRDF) and 151–261 (TTYT…VFPF). N-linked (GlcNAc...) asparagine glycosylation is found at asparagine 49, asparagine 53, asparagine 70, and asparagine 101. 2 disulfide bridges follow: cysteine 96–cysteine 105 and cysteine 108–cysteine 133. Residue asparagine 178 is glycosylated (N-linked (GlcNAc...) asparagine). Intrachain disulfides connect cysteine 215-cysteine 224 and cysteine 227-cysteine 252. The helical transmembrane segment at 295–315 (IGTVLAIVMPAIAAILLMVVA) threads the bilayer. The Cytoplasmic portion of the chain corresponds to 316-695 (CFCCWKRIKK…DLSITELVPR (380 aa)). The 272-residue stretch at 363–634 (FADTKMIGQG…PTISSVNIML (272 aa)) folds into the Protein kinase domain. ATP-binding positions include 369 to 377 (IGQGGFGMV) and lysine 391. Catalysis depends on aspartate 488, which acts as the Proton acceptor. The disordered stretch occupies residues 658-682 (DSSNPYSERYPRPRHSGYSDNSTVV).

This sequence belongs to the protein kinase superfamily. Ser/Thr protein kinase family. CRK subfamily.

Its subcellular location is the membrane. Functionally, involved in disease resistance. Required for NPR1/NH1-mediated immunity to the bacterial blight pathogen Xanthomomas oryzae pv. oryzae (Xoo). Required for the benzothiadiazole (BTH)-induced immune response. Possesses kinase activity in vitro. The chain is Cysteine-rich receptor-like protein kinase 6 from Oryza sativa subsp. japonica (Rice).